The primary structure comprises 305 residues: Aspartate carbamoyltransferase catalytic subunit (305 aa).

The carbamoyl phosphate site is built by Arg-51 and Thr-52. Lys-79 serves as a coordination point for L-aspartate. Carbamoyl phosphate contacts are provided by Arg-101, His-129, and Gln-132. L-aspartate-binding residues include Arg-165 and Arg-220. Carbamoyl phosphate-binding residues include Gly-258 and Pro-259.

It belongs to the aspartate/ornithine carbamoyltransferase superfamily. ATCase family. In terms of assembly, heterododecamer (2C3:3R2) of six catalytic PyrB chains organized as two trimers (C3), and six regulatory PyrI chains organized as three dimers (R2).

It catalyses the reaction carbamoyl phosphate + L-aspartate = N-carbamoyl-L-aspartate + phosphate + H(+). It participates in pyrimidine metabolism; UMP biosynthesis via de novo pathway; (S)-dihydroorotate from bicarbonate: step 2/3. In terms of biological role, catalyzes the condensation of carbamoyl phosphate and aspartate to form carbamoyl aspartate and inorganic phosphate, the committed step in the de novo pyrimidine nucleotide biosynthesis pathway. This Rubrobacter xylanophilus (strain DSM 9941 / JCM 11954 / NBRC 16129 / PRD-1) protein is Aspartate carbamoyltransferase catalytic subunit.